The primary structure comprises 535 residues: Heparanase (535 aa).

The first 27 residues, 1-27, serve as a signal peptide directing secretion; that stretch reads MLRLLLLWLWGPLGALAQGAPAGTAPT. Heparan sulfate group-binding positions include 54–56 and threonine 89; that span reads DAS. Positions 102–149 are cleaved as a propeptide — linker peptide; sequence PTSEERSYWKSQVNHDICRSEPVSAAVLRKLQVEWPFQELLLLREQYQ. A disulfide bridge connects residues cysteine 119 and cysteine 171. Residue 150–154 coordinates heparan sulfate group; it reads KEFKN. 2 N-linked (GlcNAc...) asparagine glycosylation sites follow: asparagine 192 and asparagine 209. Catalysis depends on glutamate 217, which acts as the Proton donor. Residues 262–272, histidine 288, and arginine 295 contribute to the heparan sulfate group site; that span reads QPRGKTVKLLR. The tract at residues 280–409 is required for heterodimerization with the heparanase 8 kDa subunit; the sequence is EVIDSLTWHH…LLFKKLVGPR (130 aa). The active-site Nucleophile is glutamate 335. Residues 340–342 and 381–383 each bind heparan sulfate group; these read YGG and GNY. A disulfide bridge connects residues cysteine 429 and cysteine 534. Asparagine 451 carries an N-linked (GlcNAc...) asparagine glycan. The segment at 519-535 is required for transferring proheparanase to the Golgi apparatus, secretion and subsequent enzyme activity and for enhancement of PKB/AKT1 phosphorylation; the sequence is FSYGFFVIRNAKIAACI.

It belongs to the glycosyl hydrolase 79 family. Heterodimer; heterodimer formation between the 8 kDa and the 50 kDa subunits is required for enzyme activity. Interacts with TF; the interaction, inhibited by heparin, enhances the generation of activated factor X and activates coagulation. Interacts with HRG; the interaction is enhanced at acidic pH, partially inhibits binding of HPSE to cell surface receptors and modulates its enzymatic activity. Interacts with SDC1; the interaction enhances the shedding of SDC1. Interacts with HPSE2. Proteolytically processed. The cleavage of the 65 kDa form leads to the generation of a linker peptide, and the 8 kDa and 50 kDa products. The active form, the 8/50 kDa heterodimer, is resistant to degradation. Complete removal of the linker peptide appears to be a prerequisite to the complete activation of the enzyme. Post-translationally, N-glycosylated. Glycosylation of the 50 kDa subunit appears to be essential for its solubility. As to expression, expressed in skin, mainly in the stratum granulosum and the first layer of the stratum corneum in the upper part of the epidermis. Also detected in hair follicles and in sebaceous glands.

The protein resides in the lysosome membrane. It is found in the secreted. It localises to the nucleus. It carries out the reaction endohydrolysis of (1-&gt;4)-beta-D-glycosidic bonds of heparan sulfate chains in heparan sulfate proteoglycan.. Its activity is regulated as follows. Inhibited by EDTA and activated by calcium and magnesium. Inhibited by laminarin sulfate and, to a lower extent, by heparin and sulfamin. Functionally, endoglycosidase that cleaves heparan sulfate proteoglycans (HSPGs) into heparan sulfate side chains and core proteoglycans. Participates in extracellular matrix (ECM) degradation and remodeling. Selectively cleaves the linkage between a glucuronic acid unit and an N-sulfo glucosamine unit carrying either a 3-O-sulfo or a 6-O-sulfo group. Can also cleave the linkage between a glucuronic acid unit and an N-sulfo glucosamine unit carrying a 2-O-sulfo group, but not linkages between a glucuronic acid unit and a 2-O-sulfated iduronic acid moiety. It is essentially inactive at neutral pH but becomes active under acidic conditions such as during tumor invasion and in inflammatory processes. Facilitates cell migration associated with metastasis, wound healing and inflammation. Enhances shedding of syndecans, and increases endothelial invasion and angiogenesis in myelomas. Acts as a procoagulant by increasing the generation of activation factor X in the presence of tissue factor and activation factor VII. Increases cell adhesion to the extracellular matrix (ECM), independent of its enzymatic activity. Induces AKT1/PKB phosphorylation via lipid rafts increasing cell mobility and invasion. Heparin increases this AKT1/PKB activation. Regulates osteogenesis. Enhances angiogenesis through up-regulation of SRC-mediated activation of VEGF. Implicated in hair follicle inner root sheath differentiation and hair homeostasis. This chain is Heparanase (Hpse), found in Mus musculus (Mouse).